The sequence spans 346 residues: S-adenosylmethionine:tRNA ribosyltransferase-isomerase (346 aa).

It belongs to the QueA family. Monomer.

It localises to the cytoplasm. The catalysed reaction is 7-aminomethyl-7-carbaguanosine(34) in tRNA + S-adenosyl-L-methionine = epoxyqueuosine(34) in tRNA + adenine + L-methionine + 2 H(+). It participates in tRNA modification; tRNA-queuosine biosynthesis. Functionally, transfers and isomerizes the ribose moiety from AdoMet to the 7-aminomethyl group of 7-deazaguanine (preQ1-tRNA) to give epoxyqueuosine (oQ-tRNA). The protein is S-adenosylmethionine:tRNA ribosyltransferase-isomerase of Shewanella denitrificans (strain OS217 / ATCC BAA-1090 / DSM 15013).